The primary structure comprises 299 residues: Taste receptor type 2 member 19 (299 aa).

A topological domain (extracellular) is located at residue Met1. Residues 2-22 (MCFLLIISSILVVFAFVLGNV) form a helical membrane-spanning segment. Residues 23–55 (ANGFIALVNVIDWVNTRKISSAEQILTALVVSR) lie on the Cytoplasmic side of the membrane. The helical transmembrane segment at 56–76 (IGLLWVMLFLWYATVFNSALY) threads the bilayer. Residues 77–87 (GLEVRIVASNA) lie on the Extracellular side of the membrane. A helical membrane pass occupies residues 88–108 (WAVTNHFSMWLAASLSIFCLL). Over 109-127 (KIANFSNLISLHLKKRIKS) the chain is Cytoplasmic. A helical membrane pass occupies residues 128 to 148 (VVLVILLGPLVFLICNLAVIT). Topologically, residues 149 to 181 (MDERVWTKEYEGNVTWKIKLRNAIHLSSLTVTT) are extracellular. Asn161 carries an N-linked (GlcNAc...) asparagine glycan. A helical transmembrane segment spans residues 182–202 (LANLIPFTLSLICFLLLICSL). Topologically, residues 203–226 (CKHLKKMRLHSKGSQDPSTKVHIK) are cytoplasmic. A helical transmembrane segment spans residues 227 to 247 (ALQTVTSFLMLFAIYFLCIIT). Residues 248–259 (STWNLRTQQSKL) lie on the Extracellular side of the membrane. Residues 260–280 (VLLLCQTVAIMYPSFHSFILI) form a helical membrane-spanning segment. Residues 281–299 (MGSRKLKQTFLSVLWQMTR) lie on the Cytoplasmic side of the membrane.

The protein belongs to the G-protein coupled receptor T2R family. In terms of tissue distribution, expressed in subsets of taste receptor cells of the tongue and exclusively in gustducin-positive cells.

The protein resides in the membrane. In terms of biological role, receptor that may play a role in the perception of bitterness and is gustducin-linked. May play a role in sensing the chemical composition of the gastrointestinal content. The activity of this receptor may stimulate alpha gustducin, mediate PLC-beta-2 activation and lead to the gating of TRPM5. This chain is Taste receptor type 2 member 19 (TAS2R19), found in Homo sapiens (Human).